Reading from the N-terminus, the 35-residue chain is Surfactant protein C (35 aa).

S-palmitoyl cysteine attachment occurs at residues Cys5 and Cys6.

It is found in the secreted. Its subcellular location is the extracellular space. The protein resides in the surface film. Pulmonary surfactant associated proteins promote alveolar stability by lowering the surface tension at the air-liquid interface in the peripheral air spaces. The protein is Surfactant protein C (SFTPC) of Sus scrofa (Pig).